Consider the following 617-residue polypeptide: Cytoplasmic polyadenylation element-binding protein 1 (617 aa).

A disordered region spans residues 1–38; it reads MQSQLKACGDAPAPSCSLHHRRTISKKPSNGGNSGGGG. RRM domains follow at residues 273–377 and 394–465; these read RKVF…AWRL and RTVF…HADT. Disordered stretches follow at residues 534-568 and 592-617; these read DQTR…QNVT and NQNN…AIGY. A compositionally biased stretch (basic residues) spans 542-563; that stretch reads PPHHSTSHYHHRSTPSHHHNHT.

In terms of assembly, interacts with fbf-1.

In terms of biological role, cytoplasmic polyadenylation element binding protein that binds to and regulates the translation of specific mRNAs. Essential for progression through meiosis. Involved in spermatogenesis. The polypeptide is Cytoplasmic polyadenylation element-binding protein 1 (cpb-1) (Caenorhabditis japonica).